A 384-amino-acid polypeptide reads, in one-letter code: Stress response protein bis1 (384 aa).

2 disordered regions span residues 1 to 22 and 344 to 384; these read MSLAKKIDDDEKQLVKPVNKEQ and SPLH…PKRV.

The protein belongs to the ESS2 family. Heterodimer with ish1.

It is found in the nucleus. The protein localises to the cytoplasm. The protein resides in the cytoskeleton. It localises to the spindle. In terms of biological role, has a role in maintaining cell viability during stationary phase induced by stress response. May be involved in pre-mRNA splicing. The polypeptide is Stress response protein bis1 (bis1) (Schizosaccharomyces pombe (strain 972 / ATCC 24843) (Fission yeast)).